We begin with the raw amino-acid sequence, 329 residues long: 4-hydroxythreonine-4-phosphate dehydrogenase (329 aa).

Residues H136 and T137 each coordinate substrate. The a divalent metal cation site is built by H166, H211, and H266. Positions 274, 283, and 292 each coordinate substrate.

The protein belongs to the PdxA family. In terms of assembly, homodimer. The cofactor is Zn(2+). Requires Mg(2+) as cofactor. Co(2+) serves as cofactor.

It is found in the cytoplasm. It catalyses the reaction 4-(phosphooxy)-L-threonine + NAD(+) = 3-amino-2-oxopropyl phosphate + CO2 + NADH. Its pathway is cofactor biosynthesis; pyridoxine 5'-phosphate biosynthesis; pyridoxine 5'-phosphate from D-erythrose 4-phosphate: step 4/5. Catalyzes the NAD(P)-dependent oxidation of 4-(phosphooxy)-L-threonine (HTP) into 2-amino-3-oxo-4-(phosphooxy)butyric acid which spontaneously decarboxylates to form 3-amino-2-oxopropyl phosphate (AHAP). This chain is 4-hydroxythreonine-4-phosphate dehydrogenase, found in Escherichia coli (strain K12 / MC4100 / BW2952).